Here is a 244-residue protein sequence, read N- to C-terminus: Pyridoxine 5'-phosphate synthase (244 aa).

Asparagine 7 lines the 3-amino-2-oxopropyl phosphate pocket. 1-deoxy-D-xylulose 5-phosphate is bound at residue 9-10 (DH). A 3-amino-2-oxopropyl phosphate-binding site is contributed by arginine 18. Histidine 43 functions as the Proton acceptor in the catalytic mechanism. The 1-deoxy-D-xylulose 5-phosphate site is built by arginine 45 and histidine 50. Residue glutamate 70 is the Proton acceptor of the active site. Threonine 100 is a binding site for 1-deoxy-D-xylulose 5-phosphate. The Proton donor role is filled by histidine 191. Residues glycine 192 and 213–214 (GH) each bind 3-amino-2-oxopropyl phosphate.

Belongs to the PNP synthase family. Homooctamer; tetramer of dimers.

The protein resides in the cytoplasm. The enzyme catalyses 3-amino-2-oxopropyl phosphate + 1-deoxy-D-xylulose 5-phosphate = pyridoxine 5'-phosphate + phosphate + 2 H2O + H(+). Its pathway is cofactor biosynthesis; pyridoxine 5'-phosphate biosynthesis; pyridoxine 5'-phosphate from D-erythrose 4-phosphate: step 5/5. Catalyzes the complicated ring closure reaction between the two acyclic compounds 1-deoxy-D-xylulose-5-phosphate (DXP) and 3-amino-2-oxopropyl phosphate (1-amino-acetone-3-phosphate or AAP) to form pyridoxine 5'-phosphate (PNP) and inorganic phosphate. The chain is Pyridoxine 5'-phosphate synthase from Laribacter hongkongensis (strain HLHK9).